Consider the following 693-residue polypeptide: Elongation factor G (693 aa).

Residues 8-282 (EHTRNIGIMA…AVIDFMPSPT (275 aa)) enclose the tr-type G domain. GTP contacts are provided by residues 17 to 24 (AHIDAGKT), 81 to 85 (DTPGH), and 135 to 138 (NKMD).

The protein belongs to the TRAFAC class translation factor GTPase superfamily. Classic translation factor GTPase family. EF-G/EF-2 subfamily.

It is found in the cytoplasm. Its function is as follows. Catalyzes the GTP-dependent ribosomal translocation step during translation elongation. During this step, the ribosome changes from the pre-translocational (PRE) to the post-translocational (POST) state as the newly formed A-site-bound peptidyl-tRNA and P-site-bound deacylated tRNA move to the P and E sites, respectively. Catalyzes the coordinated movement of the two tRNA molecules, the mRNA and conformational changes in the ribosome. The chain is Elongation factor G from Ruminiclostridium cellulolyticum (strain ATCC 35319 / DSM 5812 / JCM 6584 / H10) (Clostridium cellulolyticum).